The sequence spans 101 residues: Phosphoprotein OPG062 (101 aa).

A disordered region spans residues 51–73 (PSSPACERRPSSPSRCERMNNPG). S53 and S62 each carry phosphoserine. Residues 56–68 (CERRPSSPSRCER) are compositionally biased toward basic and acidic residues.

The protein belongs to the orthopoxvirus OPG062 family. In terms of assembly, self-associates to form high molecular-weight forms. Interacts with protein OPG157. Interacts with host RICTOR and RPTOR; these interactions disrupt the mTORC1 and mTORC2 crosstalk. Phosphorylated on two serines. While these phosphorylations do not play a role in virion assembly; they are essential for the interaction with host RICTOR and RPTOR.

It localises to the virion. Its function is as follows. Plays an essential role in virion assembly and morphogenesis. Also plays a role in the inhibition of host immune response by dysregulating mTOR. Sequesters host RICTOR and RPTOR, thereby disrupting mTORC1 and mTORC2 crosstalk. In turn, blocks the host antiviral response in part through mTOR-dependent degradation of cGAS, the primary poxvirus sensor. The chain is Phosphoprotein OPG062 (OPG062) from Homo sapiens (Human).